Consider the following 337-residue polypeptide: GTP 3',8-cyclase (337 aa).

The 226-residue stretch at 1 to 226 folds into the Radical SAM core domain; sequence MNRVDYLRIS…REKIRQKWGL (226 aa). Residue Arg-8 participates in GTP binding. Positions 15 and 19 each coordinate [4Fe-4S] cluster. Tyr-21 lines the S-adenosyl-L-methionine pocket. Residue Cys-22 participates in [4Fe-4S] cluster binding. Position 60 (Arg-60) interacts with GTP. Position 64 (Gly-64) interacts with S-adenosyl-L-methionine. Thr-91 provides a ligand contact to GTP. Residue Ser-115 participates in S-adenosyl-L-methionine binding. A GTP-binding site is contributed by Lys-155. Residue Met-189 participates in S-adenosyl-L-methionine binding. The [4Fe-4S] cluster site is built by Cys-260 and Cys-263. 265–267 contributes to the GTP binding site; sequence RMR. Cys-277 contacts [4Fe-4S] cluster.

This sequence belongs to the radical SAM superfamily. MoaA family. In terms of assembly, monomer and homodimer. [4Fe-4S] cluster serves as cofactor.

It catalyses the reaction GTP + AH2 + S-adenosyl-L-methionine = (8S)-3',8-cyclo-7,8-dihydroguanosine 5'-triphosphate + 5'-deoxyadenosine + L-methionine + A + H(+). The protein operates within cofactor biosynthesis; molybdopterin biosynthesis. In terms of biological role, catalyzes the cyclization of GTP to (8S)-3',8-cyclo-7,8-dihydroguanosine 5'-triphosphate. The sequence is that of GTP 3',8-cyclase from Crocosphaera subtropica (strain ATCC 51142 / BH68) (Cyanothece sp. (strain ATCC 51142)).